Consider the following 1387-residue polypeptide: DNA-directed RNA polymerase subunit beta' (1387 aa).

The Zn(2+) site is built by Cys70, Cys72, Cys85, and Cys88. Residues Asp461, Asp463, and Asp465 each contribute to the Mg(2+) site. Cys808, Cys882, Cys889, and Cys892 together coordinate Zn(2+). A disordered region spans residues 1367-1387 (QDEAKGVGQETPRLSGQEAAE).

The protein belongs to the RNA polymerase beta' chain family. As to quaternary structure, the RNAP catalytic core consists of 2 alpha, 1 beta, 1 beta' and 1 omega subunit. When a sigma factor is associated with the core the holoenzyme is formed, which can initiate transcription. It depends on Mg(2+) as a cofactor. Zn(2+) serves as cofactor.

It carries out the reaction RNA(n) + a ribonucleoside 5'-triphosphate = RNA(n+1) + diphosphate. Functionally, DNA-dependent RNA polymerase catalyzes the transcription of DNA into RNA using the four ribonucleoside triphosphates as substrates. The sequence is that of DNA-directed RNA polymerase subunit beta' from Granulibacter bethesdensis (strain ATCC BAA-1260 / CGDNIH1).